An 88-amino-acid polypeptide reads, in one-letter code: Small ribosomal subunit protein bS18 (88 aa).

A disordered region spans residues 1-26 (MAFAQSGGAGGGGGQRRPFFRRRKTC).

The protein belongs to the bacterial ribosomal protein bS18 family. As to quaternary structure, part of the 30S ribosomal subunit. Forms a tight heterodimer with protein bS6.

Functionally, binds as a heterodimer with protein bS6 to the central domain of the 16S rRNA, where it helps stabilize the platform of the 30S subunit. The protein is Small ribosomal subunit protein bS18 of Xanthobacter autotrophicus (strain ATCC BAA-1158 / Py2).